The following is a 338-amino-acid chain: Methionine import ATP-binding protein MetN 1 (338 aa).

The ABC transporter domain occupies 2–241 (IELHQVSKSF…AKHATTKRFV (240 aa)). An ATP-binding site is contributed by 38-45 (GYSGAGKS).

The protein belongs to the ABC transporter superfamily. Methionine importer (TC 3.A.1.24) family. In terms of assembly, the complex is composed of two ATP-binding proteins (MetN), two transmembrane proteins (MetI) and a solute-binding protein (MetQ).

The protein resides in the cell membrane. The enzyme catalyses L-methionine(out) + ATP + H2O = L-methionine(in) + ADP + phosphate + H(+). It carries out the reaction D-methionine(out) + ATP + H2O = D-methionine(in) + ADP + phosphate + H(+). Functionally, part of the ABC transporter complex MetNIQ involved in methionine import. Responsible for energy coupling to the transport system. In Listeria monocytogenes serotype 4b (strain F2365), this protein is Methionine import ATP-binding protein MetN 1.